The following is an 871-amino-acid chain: Bifunctional cordycepin biosynthesis cluster protein 3 (871 aa).

It participates in secondary metabolite biosynthesis. In terms of biological role, nucleoside/nucleotide kinase; part of the gene cluster that mediates the biosynthesis of cordycepin (COR) and pentostatin (PTN), two adenosine analogs with related bioactivity profiles as both mimic adenosine and can inhibit some of the processes that are adenosine dependent. Within the pathway, cns3 catalyzes both the first step of cordycepin biosynthesis by phosphorylating adenosine into 3'-AMP via its kinase activity and the conversion of adenosine into pentostatin via its ATP phosphoribosyltransferase activity. The first step of cordycepin biosynthesis involves hydroxyl phosphorylation of the 3'-OH position on adenosine to produce adenosine-3'-monophosphate (3'-AMP), catalyzed by kinase activity of cns3. Next, 3'-AMP is dephosphorylated to 2'-carbonyl-3'-deoxyadenosine (2'-C-3'-dA) by cns2, which is finally converted to cordycepin (3'-deoxyadenosine) by the oxidoreductase cns1. The protein is Bifunctional cordycepin biosynthesis cluster protein 3 of Cordyceps militaris (strain CM01) (Caterpillar fungus).